Reading from the N-terminus, the 382-residue chain is Lipid-A-disaccharide synthase (382 aa).

It belongs to the LpxB family.

It carries out the reaction 2-N,3-O-bis[(3R)-3-hydroxytetradecanoyl]-alpha-D-glucosaminyl 1-phosphate + UDP-2-N,3-O-bis[(3R)-3-hydroxytetradecanoyl]-alpha-D-glucosamine = lipid A disaccharide (E. coli) + UDP + H(+). The catalysed reaction is a lipid X + a UDP-2-N,3-O-bis[(3R)-3-hydroxyacyl]-alpha-D-glucosamine = a lipid A disaccharide + UDP + H(+). It functions in the pathway glycolipid biosynthesis; lipid IV(A) biosynthesis; lipid IV(A) from (3R)-3-hydroxytetradecanoyl-[acyl-carrier-protein] and UDP-N-acetyl-alpha-D-glucosamine: step 5/6. Functionally, condensation of UDP-2,3-diacylglucosamine and 2,3-diacylglucosamine-1-phosphate to form lipid A disaccharide, a precursor of lipid A, a phosphorylated glycolipid that anchors the lipopolysaccharide to the outer membrane of the cell. The chain is Lipid-A-disaccharide synthase from Salmonella paratyphi A (strain AKU_12601).